Consider the following 566-residue polypeptide: ALBINO3-like protein 3, mitochondrial (566 aa).

The N-terminal 44 residues, 1–44, are a transit peptide targeting the mitochondrion; sequence MAFRRVLLSHLRRSHHTCSSLSPHHVSATTQPSIALALFQSRFF. Helical transmembrane passes span 139-159, 207-227, 249-269, and 301-321; these read WVVIATSTVAFRTALLPILIL, LWVPAYFSIQISCFFLWITSI, LTEIPNGLYGPLFPFLIAGLH, and LLTCALYFLSFQMPQGSLLYW. TPR repeat units lie at residues 386–419, 420–453, 465–498, and 507–540; these read PKELVALSAKYLSGGHKDKSIPLLRLALEKDPEY, LQAMIILGQALYQKDQFAEAAKCLEQAASKLLDT, IVASQWAGVSNIRQGKTSEGITHLERVANMKEPD, and LDALVLYSSAIFNEGRREEAAKYLRRVVAYDPSF. Residues 547-566 form a disordered region; it reads CEEDDTIPTSSSSNSTSKTS. Residues 555–566 are compositionally biased toward low complexity; it reads TSSSSNSTSKTS.

The protein belongs to the OXA1/ALB3/YidC (TC 2.A.9.2) family.

The protein resides in the mitochondrion inner membrane. In terms of biological role, probably required for the insertion of integral membrane proteins into the mitochondrial inner membrane. The sequence is that of ALBINO3-like protein 3, mitochondrial (ALB3L3) from Arabidopsis thaliana (Mouse-ear cress).